A 145-amino-acid polypeptide reads, in one-letter code: MLLPKRVKYRRVHRGNMRGKAKRGTTVHFGEFGIQAQEASWITSRQIESARIAMTRYMKRGGKVWIKIFPHKPYTKKPLEVRMGSGKGAPEGWVAVVKPGKVMFEIAGVSEEIAREALRLASHKLPVKCKFVKREENGGDTNESN.

The protein belongs to the universal ribosomal protein uL16 family. In terms of assembly, part of the 50S ribosomal subunit.

Binds 23S rRNA and is also seen to make contacts with the A and possibly P site tRNAs. The sequence is that of Large ribosomal subunit protein uL16 from Exiguobacterium sibiricum (strain DSM 17290 / CCUG 55495 / CIP 109462 / JCM 13490 / 255-15).